A 256-amino-acid chain; its full sequence is DNA polymerase sliding clamp 2 (256 aa).

The protein belongs to the PCNA family. Homotrimer. The subunits circularize to form a toroid; DNA passes through its center. Replication factor C (RFC) is required to load the toroid on the DNA.

Its function is as follows. Sliding clamp subunit that acts as a moving platform for DNA processing. Responsible for tethering the catalytic subunit of DNA polymerase and other proteins to DNA during high-speed replication. The protein is DNA polymerase sliding clamp 2 of Pyrobaculum aerophilum (strain ATCC 51768 / DSM 7523 / JCM 9630 / CIP 104966 / NBRC 100827 / IM2).